Reading from the N-terminus, the 157-residue chain is uncharacterized protein (157 aa).

The N-terminal stretch at 1–23 (MEALRRAHEATLRLLLCRPWASG) is a signal peptide.

It is found in the secreted. This is an uncharacterized protein from Mus musculus (Mouse).